Reading from the N-terminus, the 107-residue chain is Toxin MT2730 (107 aa).

Residues 1–42 form a disordered region; that stretch reads MTHKRTKRQPAIAAGLNAPRRNRVGRQHGWPADVPSAEQRRA.

Functionally, toxic component of a type II toxin-antitoxin (TA) system. Its toxic effect is neutralized by coexpression with cognate antitoxin MT2731. The protein is Toxin MT2730 of Mycobacterium tuberculosis (strain CDC 1551 / Oshkosh).